An 860-amino-acid polypeptide reads, in one-letter code: Protein argonaute-3 (860 aa).

Methionine 1 is modified (N-acetylmethionine). Residues 230–349 (PVIQFMCEVL…LPLEVCNIVA (120 aa)) enclose the PAZ domain. The Piwi domain occupies 518–819 (LIIVILPGKT…VAFRARYHLV (302 aa)). An interaction with guide RNA region spans residues 530-567 (YAEVKRVGDTLLGMATQCVQVKNVIKTSPQTLSNLCLK). A divalent metal cation-binding residues include aspartate 598, glutamate 638, and aspartate 670. The interval 758–805 (QGTSRPSHYHVLWDDNFFTADELQLLTYQLCHTYVRCTRSVSIPAPAY) is interaction with guide RNA. Histidine 808 lines the a divalent metal cation pocket. A Phosphoserine modification is found at serine 825.

The protein belongs to the argonaute family. Ago subfamily. As to quaternary structure, interacts with EIF4B, IMP8, PRMT5 and TNRC6B. Interacts with APOBEC3F, APOBEC3G and APOBEC3H. Interacts with EDC4. Post-translationally, ubiquitinated on surface-exposed lysines by a SCF-like E3 ubiquitin-protein ligase complex containing ZSWIM8 during target-directed microRNA degradation (TDMD), a process that mediates degradation of microRNAs (miRNAs). Ubiquitination by the SCF-like E3 ubiquitin-protein ligase complex containing ZSWIM8 leads to its subsequent degradation, thereby exposing miRNAs for degradation. ZSWIM8 recognizes and binds AGO3 when it is engaged with a TDMD target.

It is found in the cytoplasm. It localises to the P-body. The enzyme catalyses Endonucleolytic cleavage to 5'-phosphomonoester.. Required for RNA-mediated gene silencing (RNAi). Binds to short RNAs such as microRNAs (miRNAs) and represses the translation of mRNAs which are complementary to them. Proposed to be involved in stabilization of small RNA derivates (siRNA) derived from processed RNA polymerase III-transcribed Alu repeats containing a DR2 retinoic acid response element (RARE) in stem cells and in the subsequent siRNA-dependent degradation of a subset of RNA polymerase II-transcribed coding mRNAs by recruiting a mRNA decapping complex involving EDC4. Possesses RNA slicer activity but only on select RNAs bearing 5'- and 3'-flanking sequences to the region of guide-target complementarity. In Mus musculus (Mouse), this protein is Protein argonaute-3 (Ago3).